The following is a 103-amino-acid chain: U-scoloptoxin(24)-Er1a (103 aa).

The first 23 residues, 1-23 (MVKSLHCLIGIVLFLAILNAGNG), serve as a signal peptide directing secretion.

It belongs to the scoloptoxin-24 family. Post-translationally, contains 1 disulfide bond. In terms of tissue distribution, expressed by the venom gland.

It is found in the secreted. The polypeptide is U-scoloptoxin(24)-Er1a (Ethmostigmus rubripes (Giant centipede)).